The following is a 404-amino-acid chain: Formate-dependent phosphoribosylglycinamide formyltransferase (404 aa).

N(1)-(5-phospho-beta-D-ribosyl)glycinamide-binding positions include 25–26 (EL) and Glu85. Residues Arg118, Lys159, 164–169 (SSGKGQ), 199–202 (EGFV), and Glu207 contribute to the ATP site. Residues 123 to 318 (RLAAEELGLP…EFELHARAIL (196 aa)) enclose the ATP-grasp domain. Mg(2+)-binding residues include Glu277 and Glu289. N(1)-(5-phospho-beta-D-ribosyl)glycinamide is bound by residues Asp296, Lys365, and 372–373 (RR).

It belongs to the PurK/PurT family. As to quaternary structure, homodimer.

It catalyses the reaction N(1)-(5-phospho-beta-D-ribosyl)glycinamide + formate + ATP = N(2)-formyl-N(1)-(5-phospho-beta-D-ribosyl)glycinamide + ADP + phosphate + H(+). The protein operates within purine metabolism; IMP biosynthesis via de novo pathway; N(2)-formyl-N(1)-(5-phospho-D-ribosyl)glycinamide from N(1)-(5-phospho-D-ribosyl)glycinamide (formate route): step 1/1. Functionally, involved in the de novo purine biosynthesis. Catalyzes the transfer of formate to 5-phospho-ribosyl-glycinamide (GAR), producing 5-phospho-ribosyl-N-formylglycinamide (FGAR). Formate is provided by PurU via hydrolysis of 10-formyl-tetrahydrofolate. This is Formate-dependent phosphoribosylglycinamide formyltransferase from Burkholderia cenocepacia (strain HI2424).